The following is a 120-amino-acid chain: NAD(P)H-quinone oxidoreductase subunit 3, chloroplastic (120 aa).

Helical transmembrane passes span 9 to 29, 64 to 84, and 88 to 108; these read IFWAFLMISSVIPILAFLISG, MFALVFVVFDVETVFLYPWAM, and VLGVSAFIEALIFVLIPIVGS.

This sequence belongs to the complex I subunit 3 family. As to quaternary structure, NDH is composed of at least 16 different subunits, 5 of which are encoded in the nucleus.

It localises to the plastid. Its subcellular location is the chloroplast thylakoid membrane. It catalyses the reaction a plastoquinone + NADH + (n+1) H(+)(in) = a plastoquinol + NAD(+) + n H(+)(out). It carries out the reaction a plastoquinone + NADPH + (n+1) H(+)(in) = a plastoquinol + NADP(+) + n H(+)(out). Functionally, NDH shuttles electrons from NAD(P)H:plastoquinone, via FMN and iron-sulfur (Fe-S) centers, to quinones in the photosynthetic chain and possibly in a chloroplast respiratory chain. The immediate electron acceptor for the enzyme in this species is believed to be plastoquinone. Couples the redox reaction to proton translocation, and thus conserves the redox energy in a proton gradient. In Illicium oligandrum (Star anise), this protein is NAD(P)H-quinone oxidoreductase subunit 3, chloroplastic.